A 523-amino-acid polypeptide reads, in one-letter code: Apolipoprotein N-acyltransferase (523 aa).

Helical transmembrane passes span 26–46 (LRFAAPLAALLGVMHTLAFAP), 49–66 (WWWLQILSLAGLAALVRQ), 74–94 (AWVGYAFGLGWFLSGIWWLYI), 109–129 (AAVLLFSAYLALHPALAAWLW), 137–157 (QLSGAASALVFGAAWLVSEWL), 185–205 (LVGVYGVVAIAATLAGLLCAA), and 212–232 (WLAGLAGVAVLAAGWPLHTIA). In terms of domain architecture, CN hydrolase spans 246–487 (LQGNVPQDVK…LGTLQADVQG (242 aa)). Glutamate 284 functions as the Proton acceptor in the catalytic mechanism. The active site involves lysine 345. Cysteine 395 acts as the Nucleophile in catalysis. A helical membrane pass occupies residues 494 to 514 (FVRTGNAPALGAGVLVLLAAL).

It belongs to the CN hydrolase family. Apolipoprotein N-acyltransferase subfamily.

The protein localises to the cell inner membrane. The enzyme catalyses N-terminal S-1,2-diacyl-sn-glyceryl-L-cysteinyl-[lipoprotein] + a glycerophospholipid = N-acyl-S-1,2-diacyl-sn-glyceryl-L-cysteinyl-[lipoprotein] + a 2-acyl-sn-glycero-3-phospholipid + H(+). It functions in the pathway protein modification; lipoprotein biosynthesis (N-acyl transfer). Its function is as follows. Catalyzes the phospholipid dependent N-acylation of the N-terminal cysteine of apolipoprotein, the last step in lipoprotein maturation. This chain is Apolipoprotein N-acyltransferase, found in Ralstonia nicotianae (strain ATCC BAA-1114 / GMI1000) (Ralstonia solanacearum).